The primary structure comprises 383 residues: Protein arginine N-methyltransferase PRMT10 (383 aa).

The segment at 1-23 (MRSSQNGGAMGGRAAGTGGGGPS) is disordered. The span at 8–22 (GAMGGRAAGTGGGGP) shows a compositional bias: gly residues. The 332-residue stretch at 29–360 (EVDYAQYFCT…KENHRLMEIE (332 aa)) folds into the SAM-dependent MTase PRMT-type domain. S-adenosyl-L-methionine-binding residues include Gln-45, Arg-54, Gly-78, Glu-100, and Glu-129. Residues Glu-143 and Glu-152 contribute to the active site. The dimerization arm stretch occupies residues 190-230 (DRKRNDFDGAMADWHNFSDEIKSYYGVDMGVLTKPFAEEQE).

This sequence belongs to the class I-like SAM-binding methyltransferase superfamily. Protein arginine N-methyltransferase family. As to quaternary structure, ring-like homodimer.

It carries out the reaction L-arginyl-[protein] + 2 S-adenosyl-L-methionine = N(omega),N(omega)-dimethyl-L-arginyl-[protein] + 2 S-adenosyl-L-homocysteine + 2 H(+). Its function is as follows. Methylates (mono and asymmetric dimethylation) the guanidino nitrogens of arginyl residues in some proteins. Essential for regulating flowering time. The protein is Protein arginine N-methyltransferase PRMT10 (PRMT10) of Arabidopsis thaliana (Mouse-ear cress).